Here is a 378-residue protein sequence, read N- to C-terminus: Cobalt-precorrin-5B C(1)-methyltransferase (378 aa).

It belongs to the CbiD family.

The enzyme catalyses Co-precorrin-5B + S-adenosyl-L-methionine = Co-precorrin-6A + S-adenosyl-L-homocysteine. It participates in cofactor biosynthesis; adenosylcobalamin biosynthesis; cob(II)yrinate a,c-diamide from sirohydrochlorin (anaerobic route): step 6/10. Its function is as follows. Catalyzes the methylation of C-1 in cobalt-precorrin-5B to form cobalt-precorrin-6A. This is Cobalt-precorrin-5B C(1)-methyltransferase from Thermoplasma volcanium (strain ATCC 51530 / DSM 4299 / JCM 9571 / NBRC 15438 / GSS1).